The chain runs to 658 residues: Interferon-induced GTP-binding protein Mx1 (658 aa).

Met1 carries the N-acetylmethionine modification. Residues 1-20 are disordered; it reads MVNSKGKITDSDPGSSHLLL. The region spanning 65 to 338 is the Dynamin-type G domain; the sequence is DLALPAIAVI…LITHICKTLP (274 aa). Residues 75–82 are G1 motif; sequence GDQSSGKS. 75–82 is a GTP binding site; sequence GDQSSGKS. Residues 100–102 form a G2 motif region; the sequence is VTR. Positions 176–179 are G3 motif; the sequence is DLPG. GTP contacts are provided by residues 176-180 and 245-248; these read DLPGI and TKPD. The interval 245-248 is G4 motif; sequence TKPD. The G5 motif stretch occupies residues 277–280; the sequence is KCRG. The tract at residues 339–364 is bundle signaling element (BSE); that stretch reads LLEKQIKENYEKITEELQKYGSDVPE. Residues 364–531 are middle domain; the sequence is EEEHEKMFFL…HFQMEQIVYC (168 aa). Residues 365 to 628 are stalk; it reads EEHEKMFFLI…KDTHNWLLKE (264 aa). A critical for lipid-binding region spans residues 551-554; that stretch reads KDKK. The region spanning 570–658 is the GED domain; the sequence is LSDIFEHLLA…ARRRLAKFPG (89 aa).

The protein belongs to the TRAFAC class dynamin-like GTPase superfamily. Dynamin/Fzo/YdjA family. Homooligomer. Oligomerizes into multimeric filamentous or ring-like structures by virtue of its stalk domain. Oligomerization is critical for GTPase activity, protein stability, and recognition of viral target structures. Interacts with TRPC1, TRPC3, TRPC4, TRPC5, TRPC6 and TRPC7. Interacts with HSPA5. Interacts with TUBB/TUBB5. Interacts with DDX39A and DDX39B. Post-translationally, ISGylated.

It is found in the cytoplasm. The protein resides in the endoplasmic reticulum membrane. It localises to the perinuclear region. In terms of biological role, interferon-induced dynamin-like GTPase with antiviral activity. The sequence is that of Interferon-induced GTP-binding protein Mx1 (MX1) from Otaria byronia (South American sea lion).